Consider the following 472-residue polypeptide: 2-oxoisovalerate dehydrogenase subunit alpha 2, mitochondrial (472 aa).

185-187 provides a ligand contact to thiamine diphosphate; sequence QYR. Residues S234, T239, and Q240 each contribute to the K(+) site.

It belongs to the BCKDHA family. In terms of assembly, heterotetramer of alpha and beta chains. Thiamine diphosphate serves as cofactor.

The protein resides in the mitochondrion matrix. The enzyme catalyses N(6)-[(R)-lipoyl]-L-lysyl-[protein] + 3-methyl-2-oxobutanoate + H(+) = N(6)-[(R)-S(8)-2-methylpropanoyldihydrolipoyl]-L-lysyl-[protein] + CO2. In terms of biological role, the branched-chain alpha-keto dehydrogenase complex catalyzes the overall conversion of alpha-keto acids to acyl-CoA and CO(2). It contains multiple copies of three enzymatic components: branched-chain alpha-keto acid decarboxylase (E1), lipoamide acyltransferase (E2) and lipoamide dehydrogenase (E3). This Arabidopsis thaliana (Mouse-ear cress) protein is 2-oxoisovalerate dehydrogenase subunit alpha 2, mitochondrial.